A 1415-amino-acid polypeptide reads, in one-letter code: DNA-directed RNA polymerase subunit beta' (1415 aa).

Residues Cys-72, Cys-74, Cys-87, and Cys-90 each coordinate Zn(2+). Mg(2+) contacts are provided by Asp-463, Asp-465, and Asp-467. Zn(2+) contacts are provided by Cys-812, Cys-886, Cys-893, and Cys-896.

This sequence belongs to the RNA polymerase beta' chain family. As to quaternary structure, the RNAP catalytic core consists of 2 alpha, 1 beta, 1 beta' and 1 omega subunit. When a sigma factor is associated with the core the holoenzyme is formed, which can initiate transcription. The cofactor is Mg(2+). It depends on Zn(2+) as a cofactor.

It carries out the reaction RNA(n) + a ribonucleoside 5'-triphosphate = RNA(n+1) + diphosphate. Functionally, DNA-dependent RNA polymerase catalyzes the transcription of DNA into RNA using the four ribonucleoside triphosphates as substrates. This Dinoroseobacter shibae (strain DSM 16493 / NCIMB 14021 / DFL 12) protein is DNA-directed RNA polymerase subunit beta'.